We begin with the raw amino-acid sequence, 158 residues long: Endoribonuclease YbeY (158 aa).

Residues His-114, His-118, and His-124 each coordinate Zn(2+).

It belongs to the endoribonuclease YbeY family. Zn(2+) is required as a cofactor.

Its subcellular location is the cytoplasm. Its function is as follows. Single strand-specific metallo-endoribonuclease involved in late-stage 70S ribosome quality control and in maturation of the 3' terminus of the 16S rRNA. In Pasteurella multocida (strain Pm70), this protein is Endoribonuclease YbeY.